Reading from the N-terminus, the 287-residue chain is Shikimate dehydrogenase (NADP(+)) (287 aa).

Shikimate contacts are provided by residues 18–20 and T66; that span reads SYS. Catalysis depends on K70, which acts as the Proton acceptor. E82 contributes to the NADP(+) binding site. Shikimate contacts are provided by N91 and D106. NADP(+) is bound by residues 130–134 and M228; that span reads GSGGA. A shikimate-binding site is contributed by Y230. G251 serves as a coordination point for NADP(+).

This sequence belongs to the shikimate dehydrogenase family. Homodimer.

It catalyses the reaction shikimate + NADP(+) = 3-dehydroshikimate + NADPH + H(+). Its pathway is metabolic intermediate biosynthesis; chorismate biosynthesis; chorismate from D-erythrose 4-phosphate and phosphoenolpyruvate: step 4/7. Its function is as follows. Involved in the biosynthesis of the chorismate, which leads to the biosynthesis of aromatic amino acids. Catalyzes the reversible NADPH linked reduction of 3-dehydroshikimate (DHSA) to yield shikimate (SA). This Chlorobium chlorochromatii (strain CaD3) protein is Shikimate dehydrogenase (NADP(+)).